The primary structure comprises 1023 residues: Probable histidine kinase 3 (1023 aa).

Over 1 to 80 (MDEMSCGGGG…RGWRVVRETW (80 aa)) the chain is Cytoplasmic. Residues 81–101 (WWVLLLWILAGSLGSFYLFLF) form a helical membrane-spanning segment. At 102-387 (MNAQSLDKRR…CRFEKKPPWP (286 aa)) the chain is on the extracellular side. Residues 151 to 352 (TPSAIDQMTF…TNESPISMYG (202 aa)) enclose the CHASE domain. Residues 388 to 408 (WLAITSSFGTLVIALLTGHIF) traverse the membrane as a helical segment. Topologically, residues 409–1023 (QATVHRIAKV…RFFQNHDQVE (615 aa)) are cytoplasmic. A Histidine kinase domain is found at 445–715 (TVSHEIRTPM…TFTFTAVLMR (271 aa)). Position 448 is a phosphohistidine; by autocatalysis (histidine 448). Response regulatory domains are found at residues 732–854 (NALV…RRAL) and 880–1016 (QIIV…ARFF). Aspartate 783 bears the 4-aspartylphosphate mark. The segment at 812–831 (LFLLGSSASSPKGGSDTSRE) is disordered. Over residues 817–827 (SSASSPKGGSD) the composition is skewed to polar residues. The residue at position 930 (aspartate 930) is a 4-aspartylphosphate.

Activation probably requires a transfer of a phosphate group between a His in the transmitter domain and an Asp of the receiver domain.

Its subcellular location is the cell membrane. It catalyses the reaction ATP + protein L-histidine = ADP + protein N-phospho-L-histidine.. Cytokinin receptor related to bacterial two-component regulators. Functions as a histidine kinase and transmits the stress signal to a downstream MAPK cascade. This Oryza sativa subsp. indica (Rice) protein is Probable histidine kinase 3.